Here is a 399-residue protein sequence, read N- to C-terminus: Dual specificity mitogen-activated protein kinase kinase 4 (399 aa).

A disordered region spans residues 1-40 (MAAPSPSGGGGSGGGSGSGTPGPVGSPAPGHPAVSSMQGK). Position 2 is an N-acetylalanine (Ala-2). Over residues 7 to 22 (SGGGGSGGGSGSGTPG) the composition is skewed to gly residues. The tract at residues 37–52 (MQGKRKALKLNFANPP) is d domain. Residue Arg-58 is modified to Asymmetric dimethylarginine; alternate. Arg-58 carries the post-translational modification Omega-N-methylarginine; alternate. Ser-90 is modified (phosphoserine). The Protein kinase domain maps to 102 to 367 (LKDLGEIGRG…YKELLKHPFI (266 aa)). ATP contacts are provided by residues 108–116 (IGRGAYGSV) and Lys-131. The active-site Proton acceptor is the Asp-229. The residue at position 257 (Ser-257) is a Phosphoserine; by MAP3K. Thr-261 is modified (phosphothreonine; by MAP3K). The DVD domain stretch occupies residues 364-387 (HPFILMYEERAVEVACYVCKILDQ).

The protein belongs to the protein kinase superfamily. STE Ser/Thr protein kinase family. MAP kinase kinase subfamily. In terms of assembly, interacts with SPAG9. Interacts (via its D domain) with its substrates MAPK8/JNK1, MAPK9/JNK2, MAPK10/JNK3, MAPK11 and MAPK14. Interacts (via its DVD domain) with MAP3Ks activators like MAP3K1/MEKK1 and MAP3K11/MLK3. Interacts with ARRB1, ARRB2 and MAPK8IP3/JIP3. In terms of processing, activated by phosphorylation on Ser-257 and Thr-261 by MAP kinase kinase kinases (MAP3Ks). In terms of tissue distribution, abundant expression is seen in the skeletal muscle. It is also widely expressed in other tissues.

The protein resides in the cytoplasm. It is found in the nucleus. The catalysed reaction is L-seryl-[protein] + ATP = O-phospho-L-seryl-[protein] + ADP + H(+). It carries out the reaction L-threonyl-[protein] + ATP = O-phospho-L-threonyl-[protein] + ADP + H(+). The enzyme catalyses L-tyrosyl-[protein] + ATP = O-phospho-L-tyrosyl-[protein] + ADP + H(+). With respect to regulation, activated in response to a variety of cellular stresses, including UV and gamma-irradiation, heat shock, hyperosmolarity, T-cell receptor stimulation, peroxide and inflammatory cytokines. Also activated by developmental cues. MAP2K4/MKK4 is activated by the majority of MKKKs, such as MAP3K5/ASK1, MAP3K1/MEKK1, MAP3K7/TAK1, MAP3K10/MLK2, MAP3K11/MLK3, MAP3K12/DLK and MAP3K13/LZK. Functionally, dual specificity protein kinase which acts as an essential component of the MAP kinase signal transduction pathway. Essential component of the stress-activated protein kinase/c-Jun N-terminal kinase (SAP/JNK) signaling pathway. With MAP2K7/MKK7, is the one of the only known kinase to directly activate the stress-activated protein kinase/c-Jun N-terminal kinases MAPK8/JNK1, MAPK9/JNK2 and MAPK10/JNK3. MAP2K4/MKK4 and MAP2K7/MKK7 both activate the JNKs by phosphorylation, but they differ in their preference for the phosphorylation site in the Thr-Pro-Tyr motif. MAP2K4 shows preference for phosphorylation of the Tyr residue and MAP2K7/MKK7 for the Thr residue. The phosphorylation of the Thr residue by MAP2K7/MKK7 seems to be the prerequisite for JNK activation at least in response to pro-inflammatory cytokines, while other stimuli activate both MAP2K4/MKK4 and MAP2K7/MKK7 which synergistically phosphorylate JNKs. MAP2K4 is required for maintaining peripheral lymphoid homeostasis. The MKK/JNK signaling pathway is also involved in mitochondrial death signaling pathway, including the release cytochrome c, leading to apoptosis. Whereas MAP2K7/MKK7 exclusively activates JNKs, MAP2K4/MKK4 additionally activates the p38 MAPKs MAPK11, MAPK12, MAPK13 and MAPK14. The sequence is that of Dual specificity mitogen-activated protein kinase kinase 4 (MAP2K4) from Homo sapiens (Human).